A 163-amino-acid polypeptide reads, in one-letter code: Ribosome maturation factor RimM (163 aa).

The 71-residue stretch at 92-162 (EDEFYVADLV…AGRAVVRPPE (71 aa)) folds into the PRC barrel domain.

It belongs to the RimM family. Binds ribosomal protein uS19.

It localises to the cytoplasm. In terms of biological role, an accessory protein needed during the final step in the assembly of 30S ribosomal subunit, possibly for assembly of the head region. Essential for efficient processing of 16S rRNA. May be needed both before and after RbfA during the maturation of 16S rRNA. It has affinity for free ribosomal 30S subunits but not for 70S ribosomes. This chain is Ribosome maturation factor RimM, found in Rubrobacter xylanophilus (strain DSM 9941 / JCM 11954 / NBRC 16129 / PRD-1).